The chain runs to 459 residues: Magnesium transporter MRS2-11, chloroplastic (459 aa).

Residues Met1–Lys62 constitute a chloroplast transit peptide. Residues Gly76 to Ser122 are disordered. Residues Gly101 to Asp110 are compositionally biased toward basic and acidic residues. Residues Ser111–Ser122 are compositionally biased toward low complexity. A run of 2 helical transmembrane segments spans residues Leu397–Gly417 and Ala430–Tyr450. The Required for magnesium transport activity motif lies at Gly417–Asn419.

This sequence belongs to the CorA metal ion transporter (MIT) (TC 1.A.35.5) family. In terms of tissue distribution, expressed in the green part of the plant. Preferentially expressed in the spongy mesophyll cells and stomata of young leaves but also detected in cotyledons and at the base of the leaf petioles.

It is found in the plastid. The protein localises to the chloroplast membrane. Functionally, high-affinity magnesium transporter that mediates the influx of magnesium in chloroplast. The chain is Magnesium transporter MRS2-11, chloroplastic (MRS2-11) from Arabidopsis thaliana (Mouse-ear cress).